Reading from the N-terminus, the 427-residue chain is Transcobalamin-2 (427 aa).

Residues 1-18 (MRHLGAFLFLLGVLGALT) form the signal peptide. 4 disulfide bridges follow: cysteine 21/cysteine 267, cysteine 83/cysteine 96, cysteine 116/cysteine 309, and cysteine 165/cysteine 205. Residues glutamine 104, 152–156 (TSYYQ), histidine 190, 190–194 (HHSVD), asparagine 242, serine 245, glutamine 291, and 395–397 (WQL) each bind cob(II)alamin.

This sequence belongs to the eukaryotic cobalamin transport proteins family. As to quaternary structure, interacts with CD320 (via LDL-receptor class A domains).

The protein resides in the secreted. Primary vitamin B12-binding and transport protein. Delivers cobalamin to cells. The chain is Transcobalamin-2 (TCN2) from Homo sapiens (Human).